The primary structure comprises 259 residues: Activator of lactoyl-CoA dehydratase (259 aa).

Residues Cys125 and Cys164 each contribute to the [4Fe-4S] cluster site.

As to quaternary structure, homodimer. [4Fe-4S] cluster is required as a cofactor.

Functionally, required for the activation of lactoyl-CoA dehydratase. This protein is extremely sensitive towards oxygen. The polypeptide is Activator of lactoyl-CoA dehydratase (lcdC) (Anaerotignum propionicum (Clostridium propionicum)).